The following is a 292-amino-acid chain: NAD kinase (292 aa).

The active-site Proton acceptor is D73. NAD(+) contacts are provided by residues 73–74 (DG), 147–148 (NE), H158, R175, D177, 188–193 (TAYSLS), and Q247.

This sequence belongs to the NAD kinase family. The cofactor is a divalent metal cation.

The protein resides in the cytoplasm. It carries out the reaction NAD(+) + ATP = ADP + NADP(+) + H(+). In terms of biological role, involved in the regulation of the intracellular balance of NAD and NADP, and is a key enzyme in the biosynthesis of NADP. Catalyzes specifically the phosphorylation on 2'-hydroxyl of the adenosine moiety of NAD to yield NADP. The sequence is that of NAD kinase from Enterobacter sp. (strain 638).